The following is a 154-amino-acid chain: Ribonuclease H (154 aa).

Residues 1 to 141 (MKRIEAYTDG…ADELARAGME (141 aa)) form the RNase H type-1 domain. Mg(2+) is bound by residues Asp9, Glu47, Asp69, and Asp133.

This sequence belongs to the RNase H family. Monomer. Mg(2+) serves as cofactor.

Its subcellular location is the cytoplasm. It carries out the reaction Endonucleolytic cleavage to 5'-phosphomonoester.. In terms of biological role, endonuclease that specifically degrades the RNA of RNA-DNA hybrids. The sequence is that of Ribonuclease H from Brucella abortus (strain 2308).